Consider the following 260-residue polypeptide: Hemin import ATP-binding protein HmuV (260 aa).

Residues 6-242 form the ABC transporter domain; sequence LSGRNISMKY…ERIEQVYGYR (237 aa). 38-45 is a binding site for ATP; the sequence is GPNGAGKS.

Belongs to the ABC transporter superfamily. Heme (hemin) importer (TC 3.A.1.14.5) family. The complex is composed of two ATP-binding proteins (HmuV), two transmembrane proteins (HmuU) and a solute-binding protein (HmuT).

It is found in the cell inner membrane. Functionally, part of the ABC transporter complex HmuTUV involved in hemin import. Responsible for energy coupling to the transport system. The polypeptide is Hemin import ATP-binding protein HmuV (Vibrio parahaemolyticus serotype O3:K6 (strain RIMD 2210633)).